Consider the following 310-residue polypeptide: MILTVTLNPSIDISYCLENFNMDTVNRVTDVSKTPGGKGLNVTRVLSQLGDNVVATGLLGGYFGDFIRSGLDALEIRHQFLSIGGETRHCIAVLHEGQQTEILEKGPHITKDEADAFLNHLKLIFDAATIITVSGSLPKGLPSDYYARLISLANHFNKKVVLDCSGEALRSVLKSSAKPTVIKPNLEELTQLIGKPISYSLDELKSTLQQDIFRGIDWVIVSLGAKGAFAKHGNHYYQVTIPKIEVINPVGSGDATVAGIASALEHQLDDTNLLKRANVLGMLNAQETLTGHINLTYYQELISQIQVKEV.

This sequence belongs to the carbohydrate kinase PfkB family. LacC subfamily.

It carries out the reaction D-tagatofuranose 6-phosphate + ATP = D-tagatofuranose 1,6-bisphosphate + ADP + H(+). It participates in carbohydrate metabolism; D-tagatose 6-phosphate degradation; D-glyceraldehyde 3-phosphate and glycerone phosphate from D-tagatose 6-phosphate: step 1/2. The protein is Tagatose-6-phosphate kinase of Streptococcus agalactiae serotype Ia (strain ATCC 27591 / A909 / CDC SS700).